We begin with the raw amino-acid sequence, 559 residues long: Alpha-(1,6)-fucosyltransferase (559 aa).

Residues 1–4 (MLKC) lie on the Cytoplasmic side of the membrane. Residues 5-24 (IAAVGTVVWMTMFLFLYSQL) traverse the membrane as a helical; Signal-anchor for type II membrane protein segment. Residues 25–559 (SNNQSGGDSI…RKFKFEALLD (535 aa)) lie on the Lumenal side of the membrane. Residue asparagine 27 is glycosylated (N-linked (GlcNAc...) asparagine). The span at 63 to 74 (QERNDQHKKIME) shows a compositional bias: basic and acidic residues. A disordered region spans residues 63–90 (QERNDQHKKIMEQSHQLPPNPENPSLPK). Residues 80-90 (PPNPENPSLPK) are compositionally biased toward pro residues. Asparagine 134 carries N-linked (GlcNAc...) asparagine glycosylation. 3 cysteine pairs are disulfide-bonded: cysteine 188-cysteine 251, cysteine 196-cysteine 214, and cysteine 202-cysteine 206. The GT23 domain occupies 190-480 (EAKTLVCNLD…ADDGSKFHSL (291 aa)). Positions 351-352 (RR) are important for donor substrate binding. Cysteine 452 and cysteine 459 are joined by a disulfide. An SH3 domain is found at 489–550 (QQAHEVIVIE…PSYKVVNDWR (62 aa)).

Belongs to the glycosyltransferase 23 family. The cofactor is Mn(2+). It depends on Mg(2+) as a cofactor.

The protein resides in the golgi apparatus. It is found in the golgi stack membrane. It catalyses the reaction N(4)-{beta-D-GlcNAc-(1-&gt;2)-alpha-D-Man-(1-&gt;3)-[beta-D-GlcNAc-(1-&gt;2)-alpha-D-Man-(1-&gt;6)]-beta-D-Man-(1-&gt;4)-beta-D-GlcNAc-(1-&gt;4)-beta-D-GlcNAc}-L-asparaginyl-[protein] + GDP-beta-L-fucose = an N(4)-{beta-D-GlcNAc-(1-&gt;2)-alpha-D-Man-(1-&gt;3)-[beta-D-GlcNAc-(1-&gt;2)-alpha-D-Man-(1-&gt;6)]-beta-D-Man-(1-&gt;4)-beta-D-GlcNAc-(1-&gt;4)-[alpha-L-Fuc-(1-&gt;6)]-beta-D-GlcNAc}-L-asparaginyl-[protein] + GDP + H(+). It functions in the pathway protein modification; protein glycosylation. With respect to regulation, inhibited by Fe(3+), Ni(2+) and Cu(2+). Its function is as follows. Catalyzes the addition of fucose in alpha 1-6 linkage to the first GlcNAc residue, next to the peptide chains in N-glycans. The addition is prevented if the GlcNAc residue is already fucosylated. Involved in susceptibility to the nematotoxic C.cinerea galectin Cgl2, likely by contributing to the synthesis of core alpha-1,6-fucosylated N-glycans to which Cgl2 binds. The protein is Alpha-(1,6)-fucosyltransferase of Caenorhabditis elegans.